A 558-amino-acid polypeptide reads, in one-letter code: uncharacterized protein (558 aa).

The stretch at 47 to 78 forms a coiled coil; it reads DFDDLNSIFKDFQKQKKNLKDNILKFYNKKKE. Disordered regions lie at residues 239 to 266 and 424 to 447; these read NNNNIKTETESEIESKSESESESESKIE and NNNNNNNNNNNNNNNNNNNNNSGE. The segment covering 245 to 266 has biased composition (basic and acidic residues); it reads TETESEIESKSESESESESKIE. The span at 424–444 shows a compositional bias: low complexity; sequence NNNNNNNNNNNNNNNNNNNNN.

This is an uncharacterized protein from Dictyostelium discoideum (Social amoeba).